A 412-amino-acid polypeptide reads, in one-letter code: CCA-adding enzyme (412 aa).

Residues S41 and K44 each contribute to the ATP site. 2 residues coordinate CTP: S41 and K44. Mg(2+) is bound by residues D53, D55, and D106. ATP is bound by residues H129, K149, and Y158. The CTP site is built by H129, K149, and Y158.

It belongs to the tRNA nucleotidyltransferase/poly(A) polymerase family. Archaeal CCA-adding enzyme subfamily. Homodimer. Mg(2+) is required as a cofactor.

The enzyme catalyses a tRNA precursor + 2 CTP + ATP = a tRNA with a 3' CCA end + 3 diphosphate. It catalyses the reaction a tRNA with a 3' CCA end + 2 CTP + ATP = a tRNA with a 3' CCACCA end + 3 diphosphate. Functionally, catalyzes the addition and repair of the essential 3'-terminal CCA sequence in tRNAs without using a nucleic acid template. Adds these three nucleotides in the order of C, C, and A to the tRNA nucleotide-73, using CTP and ATP as substrates and producing inorganic pyrophosphate. tRNA 3'-terminal CCA addition is required both for tRNA processing and repair. Also involved in tRNA surveillance by mediating tandem CCA addition to generate a CCACCA at the 3' terminus of unstable tRNAs. While stable tRNAs receive only 3'-terminal CCA, unstable tRNAs are marked with CCACCA and rapidly degraded. The polypeptide is CCA-adding enzyme (Saccharolobus islandicus (strain M.16.27) (Sulfolobus islandicus)).